The chain runs to 584 residues: Arginine--tRNA ligase (584 aa).

The 'HIGH' region motif lies at 126 to 136; it reads PNIAKEMHVGH.

This sequence belongs to the class-I aminoacyl-tRNA synthetase family. Monomer.

The protein localises to the cytoplasm. It carries out the reaction tRNA(Arg) + L-arginine + ATP = L-arginyl-tRNA(Arg) + AMP + diphosphate. The chain is Arginine--tRNA ligase from Nostoc punctiforme (strain ATCC 29133 / PCC 73102).